A 335-amino-acid polypeptide reads, in one-letter code: Mycobacterial beta-ketoacyl-[acyl-carrier-protein] synthase III (335 aa).

Residues Cys-122 and His-258 contribute to the active site. The tract at residues 259-263 (QANSR) is ACP-binding. The active site involves Asn-289.

It belongs to the thiolase-like superfamily. FabH family. Homodimer.

It is found in the cytoplasm. The catalysed reaction is malonyl-[ACP] + dodecanoyl-CoA + H(+) = 3-oxotetradecanoyl-[ACP] + CO2 + CoA. The protein operates within lipid metabolism; fatty acid biosynthesis. It functions in the pathway lipid metabolism; mycolic acid biosynthesis. Its function is as follows. Catalyzes the condensation reaction of fatty acid synthesis by the addition to an acyl acceptor of two carbons from malonyl-ACP. Catalyzes the first condensation reaction which initiates fatty acid synthesis and may therefore play a role in governing the total rate of fatty acid production. Possesses both acetoacetyl-ACP synthase and acetyl transacylase activities. Its substrate specificity determines the biosynthesis of branched-chain and/or straight-chain of fatty acids. In Mycobacterium marinum (strain ATCC BAA-535 / M), this protein is Mycobacterial beta-ketoacyl-[acyl-carrier-protein] synthase III.